A 347-amino-acid chain; its full sequence is Phenylalanine--tRNA ligase alpha subunit (347 aa).

Glu261 serves as a coordination point for Mg(2+).

This sequence belongs to the class-II aminoacyl-tRNA synthetase family. Phe-tRNA synthetase alpha subunit type 1 subfamily. Tetramer of two alpha and two beta subunits. Mg(2+) serves as cofactor.

It localises to the cytoplasm. The catalysed reaction is tRNA(Phe) + L-phenylalanine + ATP = L-phenylalanyl-tRNA(Phe) + AMP + diphosphate + H(+). The chain is Phenylalanine--tRNA ligase alpha subunit from Streptococcus pyogenes serotype M18 (strain MGAS8232).